Consider the following 538-residue polypeptide: Putative ABC1 protein At2g40090 (538 aa).

The N-terminal stretch at 1-26 (MAARSLWRTRTKLLVVGTALCGGSGA) is a signal peptide.

The protein belongs to the protein kinase superfamily. ADCK protein kinase family.

In Arabidopsis thaliana (Mouse-ear cress), this protein is Putative ABC1 protein At2g40090.